A 657-amino-acid chain; its full sequence is Probable Xaa-Pro aminopeptidase P (657 aa).

D453, D464, E562, and E576 together coordinate Mn(2+).

This sequence belongs to the peptidase M24B family. The cofactor is Mn(2+).

The catalysed reaction is Release of any N-terminal amino acid, including proline, that is linked to proline, even from a dipeptide or tripeptide.. Catalyzes the removal of a penultimate prolyl residue from the N-termini of peptides. In Talaromyces marneffei (strain ATCC 18224 / CBS 334.59 / QM 7333) (Penicillium marneffei), this protein is Probable Xaa-Pro aminopeptidase P (ampp).